A 406-amino-acid polypeptide reads, in one-letter code: MRALVYDCSAGISGDMNLAALIDLGADRENLERELSKLHVHGEWKLECRPAQQHGIRGTRIDVLTEEEGHSGSSHAHHHRTMADIRKLIETSALSNTVKRTALSIFTLLAEAEARVHGTTSEEVHFHEVGAVDSIIDIAGAAICLEMLRVDTVFTGPVELGSGTVTCQHGTMPVPAPATALLAKHFRATLNGTTHEATTPTGAAYIAALAQPVPSPLAGRITATGYGIGHRQGLPVPNILRVMLVETEEEETSPELLTELCANIDDMTPEQTAYLAEKLMEAGALDTWQESVCMKKGRLAVKVCALCQPEQTDRVREAFFRHSSTPGIRQHGMLRHILRRESAPVHTPHGTVHVKTSFMHGRPHYRKAEFEDCRILAEKTGLPLGQCQLMGLFPTSSHDNDATDSV.

Belongs to the LarC family.

The enzyme catalyses Ni(II)-pyridinium-3,5-bisthiocarboxylate mononucleotide = pyridinium-3,5-bisthiocarboxylate mononucleotide + Ni(2+). Involved in the biosynthesis of a nickel-pincer cofactor ((SCS)Ni(II) pincer complex). Binds Ni(2+), and functions in nickel delivery to pyridinium-3,5-bisthiocarboxylic acid mononucleotide (P2TMN), to form the mature cofactor. Is thus probably required for the activation of nickel-pincer cofactor-dependent enzymes. This chain is Pyridinium-3,5-bisthiocarboxylic acid mononucleotide nickel insertion protein, found in Akkermansia muciniphila (strain ATCC BAA-835 / DSM 22959 / JCM 33894 / BCRC 81048 / CCUG 64013 / CIP 107961 / Muc).